Consider the following 371-residue polypeptide: Aspartate-semialdehyde dehydrogenase (371 aa).

NADP(+) contacts are provided by residues 11–14 (RGMV), 38–39 (TS), and glutamine 75. Residue arginine 104 coordinates phosphate. Residue cysteine 137 is the Acyl-thioester intermediate of the active site. Substrate is bound at residue glutamine 164. 167–168 (SG) is a binding site for NADP(+). Glutamate 243 lines the substrate pocket. Residue lysine 246 coordinates phosphate. Residue arginine 269 participates in substrate binding. Histidine 276 serves as the catalytic Proton acceptor. Position 352 (glutamine 352) interacts with NADP(+).

This sequence belongs to the aspartate-semialdehyde dehydrogenase family. In terms of assembly, homodimer.

It catalyses the reaction L-aspartate 4-semialdehyde + phosphate + NADP(+) = 4-phospho-L-aspartate + NADPH + H(+). It functions in the pathway amino-acid biosynthesis; L-lysine biosynthesis via DAP pathway; (S)-tetrahydrodipicolinate from L-aspartate: step 2/4. It participates in amino-acid biosynthesis; L-methionine biosynthesis via de novo pathway; L-homoserine from L-aspartate: step 2/3. Its pathway is amino-acid biosynthesis; L-threonine biosynthesis; L-threonine from L-aspartate: step 2/5. Catalyzes the NADPH-dependent formation of L-aspartate-semialdehyde (L-ASA) by the reductive dephosphorylation of L-aspartyl-4-phosphate. In Buchnera aphidicola subsp. Acyrthosiphon pisum (strain APS) (Acyrthosiphon pisum symbiotic bacterium), this protein is Aspartate-semialdehyde dehydrogenase.